The primary structure comprises 388 residues: Probable pectin lyase F-1 (388 aa).

A signal peptide spans 1-19 (MKTATFSTLLALSASAVNA). Cysteine 80 and cysteine 103 are joined by a disulfide. N-linked (GlcNAc...) asparagine glycosylation is present at asparagine 126. The active site involves arginine 253. An intrachain disulfide couples cysteine 328 to cysteine 336.

It belongs to the polysaccharide lyase 1 family.

The protein resides in the secreted. The catalysed reaction is Eliminative cleavage of (1-&gt;4)-alpha-D-galacturonan methyl ester to give oligosaccharides with 4-deoxy-6-O-methyl-alpha-D-galact-4-enuronosyl groups at their non-reducing ends.. Pectinolytic enzymes consist of four classes of enzymes: pectin lyase, polygalacturonase, pectin methylesterase and rhamnogalacturonase. Among pectinolytic enzymes, pectin lyase is the most important in depolymerization of pectin, since it cleaves internal glycosidic bonds of highly methylated pectins. This chain is Probable pectin lyase F-1 (pelF-1), found in Aspergillus terreus (strain NIH 2624 / FGSC A1156).